A 259-amino-acid polypeptide reads, in one-letter code: Phosphatidylglycerol--prolipoprotein diacylglyceryl transferase (259 aa).

The next 4 membrane-spanning stretches (helical) occupy residues Ile-9–Ile-29, Phe-55–Tyr-75, Glu-92–Cys-112, and Ile-117–Gly-137. Residue Arg-138 participates in a 1,2-diacyl-sn-glycero-3-phospho-(1'-sn-glycerol) binding. 3 helical membrane passes run Gln-172–Phe-192, Gly-201–Phe-221, and Ile-228–Leu-248.

Belongs to the Lgt family.

The protein resides in the cell inner membrane. The catalysed reaction is L-cysteinyl-[prolipoprotein] + a 1,2-diacyl-sn-glycero-3-phospho-(1'-sn-glycerol) = an S-1,2-diacyl-sn-glyceryl-L-cysteinyl-[prolipoprotein] + sn-glycerol 1-phosphate + H(+). The protein operates within protein modification; lipoprotein biosynthesis (diacylglyceryl transfer). In terms of biological role, catalyzes the transfer of the diacylglyceryl group from phosphatidylglycerol to the sulfhydryl group of the N-terminal cysteine of a prolipoprotein, the first step in the formation of mature lipoproteins. The chain is Phosphatidylglycerol--prolipoprotein diacylglyceryl transferase from Rickettsia africae (strain ESF-5).